The following is an 811-amino-acid chain: MSAIARAAARVRQQNTTPLQRPLLLQRKPVLTHTLALHASPLKPSLATSITSPNFQQSFQRRWASASATAEEGAKEEVWPQRKLPELTETDKLRLRRQRNVGISAHIDSGKTTLTERVLYYTGRIRDIHEVRGRDAVGAKMDSMELEREKGITIQSAATFADWVAPKPPTELKEGETVGNTDKQKFAINIIDTPGHVDFTIEVERALRVLDGAVLVLCAVSGVQSQTITVDRQMRRYNVPRLAFINKMDRAGSNPFRVIGQLRGKLKMNAAAVQVPIGSESDFAGVVDIVRMKAIYNEGVKGNQIVETDEIPESVRALAEEKRAELIEQLSEADETLCDLFLDEAPITPTDIAQALQRATTSLRFTPVFMGSAIKNTGVQPLLDGVCAYLPNPSEVQNQAMDATLPAHAPTIPLVPATDAPLVGLAFKLEEGRYGQLTYMRVYQGELKRGSMIYNARTGKRVKVPRLVRMHADEMEDVDAVVAGEICAMFGVECSSGDTFTDGSSTYTMTSMFVPEPVISLSIRPEGNETPNFSRALNRFQKEDPTFRVHVDSESQETIISGMGELHLDIYVERMKREYNVACVTGKPRVAFRETITEAAKFNYTHKKQSGGSGQFGRVIGSIEPMETDPDTGKDTAFENRIIGGNIPNQFIPAIQKGFQEALDRGLITGHPITGCKFVLDDGSAHAVDSNELAFRLAAIGAFREAFNKARPVVLEPVMTVEIVAPIEFQGNVIGAINQRKGTIVDTEVRDDEFTLTAEVALNDMFGYSSQLRGMTQGKGEFSMEYKNHQPVLPNIQKEMAEAFRKKQLSK.

Residues 1–64 (MSAIARAAAR…FQQSFQRRWA (64 aa)) constitute a mitochondrion transit peptide. The region spanning 96 to 394 (RRQRNVGISA…GVCAYLPNPS (299 aa)) is the tr-type G domain. GTP is bound by residues 105–112 (AHIDSGKT), 192–196 (DTPGH), and 246–249 (NKMD).

This sequence belongs to the TRAFAC class translation factor GTPase superfamily. Classic translation factor GTPase family. EF-G/EF-2 subfamily.

It is found in the mitochondrion. It participates in protein biosynthesis; polypeptide chain elongation. Mitochondrial GTPase that catalyzes the GTP-dependent ribosomal translocation step during translation elongation. During this step, the ribosome changes from the pre-translocational (PRE) to the post-translocational (POST) state as the newly formed A-site-bound peptidyl-tRNA and P-site-bound deacylated tRNA move to the P and E sites, respectively. Catalyzes the coordinated movement of the two tRNA molecules, the mRNA and conformational changes in the ribosome. The chain is Elongation factor G, mitochondrial from Cryptococcus neoformans var. neoformans serotype D (strain JEC21 / ATCC MYA-565) (Filobasidiella neoformans).